The chain runs to 353 residues: MTAILERRESESLWGRFCNWITSTENRLYIGWFGVLMIPTLLTATSVFIIAFIAAPPVDIDGIREPVSGSLLYGNNIISGAIIPTSAAIGLHFYPIWEAASVDEWLYNGGPYELIVLHFLLGVACYMGREWELSFRLGMRPWIAVAYSAPVAAATAVFLIYPIGQGSFSDGMPLGISGTFNFMIVFQAEHNILMHPFHMLGVAGVFGGSLFSAMHGSLVTSSLIRETTENESANAGYRFGQEEETYNIVAAHGYFGRLIFQYASFNNSRSLHFFLAAWPVVGIWFTALGISTMAFNLNGFNFNQSVVDSQGRVINTWADIINRANLGMEVMHERNAHNFPLDLAGVEVPSTNG.

Thr2 is subject to N-acetylthreonine. Thr2 carries the phosphothreonine modification. Transmembrane regions (helical) follow at residues 29-46 (YIGW…TATS), 118-133 (HFLL…EWEL), and 142-156 (WIAV…AATA). Chlorophyll a is bound at residue His118. Tyr126 is a binding site for pheophytin a. Residues Asp170 and Glu189 each coordinate [CaMn4O5] cluster. Residues 197-218 (FHMLGVAGVFGGSLFSAMHGSL) form a helical membrane-spanning segment. Position 198 (His198) interacts with chlorophyll a. Residues His215 and 264–265 (SF) each bind a quinone. His215 is a binding site for Fe cation. His272 is a binding site for Fe cation. The helical transmembrane segment at 274-288 (FLAAWPVVGIWFTAL) threads the bilayer. Residues His332, Glu333, Asp342, and Ala344 each coordinate [CaMn4O5] cluster. Residues 345 to 353 (GVEVPSTNG) constitute a propeptide that is removed on maturation.

This sequence belongs to the reaction center PufL/M/PsbA/D family. PSII is composed of 1 copy each of membrane proteins PsbA, PsbB, PsbC, PsbD, PsbE, PsbF, PsbH, PsbI, PsbJ, PsbK, PsbL, PsbM, PsbT, PsbX, PsbY, PsbZ, Psb30/Ycf12, at least 3 peripheral proteins of the oxygen-evolving complex and a large number of cofactors. It forms dimeric complexes. The D1/D2 heterodimer binds P680, chlorophylls that are the primary electron donor of PSII, and subsequent electron acceptors. It shares a non-heme iron and each subunit binds pheophytin, quinone, additional chlorophylls, carotenoids and lipids. D1 provides most of the ligands for the Mn4-Ca-O5 cluster of the oxygen-evolving complex (OEC). There is also a Cl(-1) ion associated with D1 and D2, which is required for oxygen evolution. The PSII complex binds additional chlorophylls, carotenoids and specific lipids. is required as a cofactor. Tyr-161 forms a radical intermediate that is referred to as redox-active TyrZ, YZ or Y-Z. In terms of processing, C-terminally processed by CTPA; processing is essential to allow assembly of the oxygen-evolving complex and thus photosynthetic growth.

The protein resides in the plastid. It is found in the chloroplast thylakoid membrane. The catalysed reaction is 2 a plastoquinone + 4 hnu + 2 H2O = 2 a plastoquinol + O2. Its function is as follows. Photosystem II (PSII) is a light-driven water:plastoquinone oxidoreductase that uses light energy to abstract electrons from H(2)O, generating O(2) and a proton gradient subsequently used for ATP formation. It consists of a core antenna complex that captures photons, and an electron transfer chain that converts photonic excitation into a charge separation. The D1/D2 (PsbA/PsbD) reaction center heterodimer binds P680, the primary electron donor of PSII as well as several subsequent electron acceptors. This is Photosystem II protein D1 from Morus indica (Mulberry).